Consider the following 623-residue polypeptide: mRNA-capping enzyme (623 aa).

Residues 13-224 are TPase; it reads MGLPDRWLHC…IDNGRPSTSQ (212 aa). In terms of domain architecture, Tyrosine-protein phosphatase spans 44–196; that stretch reads YDNQIAERRY…YDPTEDDKIL (153 aa). The Phosphocysteine intermediate role is filled by Cys-136. The span at 213 to 229 shows a compositional bias: polar residues; the sequence is TQIDNGRPSTSQQIPAT. The disordered stretch occupies residues 213 to 243; sequence TQIDNGRPSTSQQIPATNGNNNQNGNQLSGG. Positions 230–239 are enriched in low complexity; the sequence is NGNNNQNGNQ. The segment at 241 to 585 is GTase; it reads SGGGDNSKLF…NPVTETYLIE (345 aa). Lys-311 acts as the N6-GMP-lysine intermediate in catalysis. GTP is bound by residues Arg-316, Arg-331, 357-359, 477-479, and 553-558; these read DTE, KWK, and RERTDK. The tract at residues 603–623 is disordered; it reads HHQIHQQQLHEGEPEARRQKL. Over residues 610 to 623 the composition is skewed to basic and acidic residues; the sequence is QLHEGEPEARRQKL.

The protein in the N-terminal section; belongs to the non-receptor class of the protein-tyrosine phosphatase family. In the C-terminal section; belongs to the eukaryotic GTase family.

It is found in the nucleus. It carries out the reaction a 5'-end triphospho-ribonucleoside in mRNA + H2O = a 5'-end diphospho-ribonucleoside in mRNA + phosphate + H(+). The enzyme catalyses a 5'-end diphospho-ribonucleoside in mRNA + GTP + H(+) = a 5'-end (5'-triphosphoguanosine)-ribonucleoside in mRNA + diphosphate. RNA triphosphatase activity is inhibited by magnesium. Its function is as follows. Bifunctional mRNA-capping enzyme exhibiting RNA 5'-triphosphate monophosphatase activity in the N-terminal part and mRNA guanylyltransferase activity in the C-terminal part. Catalyzes the first two steps of cap formation: by removing the gamma-phosphate from the 5'-triphosphate end of nascent mRNA to yield a diphosphate end, and by transferring the GMP moiety of GTP to the 5'-diphosphate terminus via a covalent enzyme-GMP reaction intermediate. The chain is mRNA-capping enzyme (cel-1) from Caenorhabditis elegans.